Here is a 539-residue protein sequence, read N- to C-terminus: Serine/threonine-protein kinase BUR1 (539 aa).

A compositionally biased stretch (polar residues) spans 1–15 (MEKLSETTPNGTSPR). A disordered region spans residues 1-27 (MEKLSETTPNGTSPRTFALNHSRPRSS). The 303-residue stretch at 37-339 (YELLGKLGEG…AVDALQHPWF (303 aa)) folds into the Protein kinase domain. ATP-binding positions include 43–51 (LGEGTFGEV) and lysine 66. Residue aspartate 169 is the Proton acceptor of the active site. A disordered region spans residues 370–539 (AALPPAPKGG…DRPDHNGYRR (170 aa)). Basic and acidic residues-rich tracts occupy residues 414-428 (NGPD…RERG), 471-514 (NRDD…DRGT), and 521-539 (PRHD…GYRR).

It belongs to the protein kinase superfamily. CMGC Ser/Thr protein kinase family. CDC2/CDKX subfamily.

Its subcellular location is the nucleus. The catalysed reaction is L-seryl-[protein] + ATP = O-phospho-L-seryl-[protein] + ADP + H(+). The enzyme catalyses L-threonyl-[protein] + ATP = O-phospho-L-threonyl-[protein] + ADP + H(+). It catalyses the reaction [DNA-directed RNA polymerase] + ATP = phospho-[DNA-directed RNA polymerase] + ADP + H(+). Functionally, serine/threonine-protein kinase involved in transcription regulation. Phosphorylates the UBC2/RAD6 ubiquitin-conjugating enzyme (E2), leading to monoubiquitination of histone H2B and the silencing of telomeric-associated genes. Also required for histone H3 methylation. Necessary for the recovery from pheromone-induced growth arrest in the cell cycle G1 phase. This is Serine/threonine-protein kinase BUR1 (BUR1) from Gibberella zeae (strain ATCC MYA-4620 / CBS 123657 / FGSC 9075 / NRRL 31084 / PH-1) (Wheat head blight fungus).